Here is a 283-residue protein sequence, read N- to C-terminus: 2-dehydro-3-deoxyphosphooctonate aldolase (283 aa).

It belongs to the KdsA family.

It is found in the cytoplasm. The enzyme catalyses D-arabinose 5-phosphate + phosphoenolpyruvate + H2O = 3-deoxy-alpha-D-manno-2-octulosonate-8-phosphate + phosphate. Its pathway is carbohydrate biosynthesis; 3-deoxy-D-manno-octulosonate biosynthesis; 3-deoxy-D-manno-octulosonate from D-ribulose 5-phosphate: step 2/3. The protein operates within bacterial outer membrane biogenesis; lipopolysaccharide biosynthesis. In Laribacter hongkongensis (strain HLHK9), this protein is 2-dehydro-3-deoxyphosphooctonate aldolase.